Reading from the N-terminus, the 476-residue chain is MKVSLPAFEKARVLVVGDVMLDRYWVGPTGRISPEAPVPVVKINQVEDRPGGAANVALNIATLGGQVQLAGLVGQDDTAIALTLGVQTLGVEPQWLSIADKPTITKLRVLSRNQQLIRLDFEEAFDKADSVRLLKQSEALLDSIDVVVLSDYAKGAIDQPRDFIALARSKGVMVLVDPKGSDFGRYHGASLITPNMSEFEAVVGTVTSEADLLEKARGLLKEHHFDAILVTRSEKGMTLVTANAPELHIPTVAREVYDVTGAGDTVISALATSLAAGADLPQACAIANTAAGVVVGKLGTSTVSRIELIEALALHHGESGFGVVSEDQLAYALEQAKLRGERVVMTNGCFDILHAGHVSYLKQAKALGDRLIVAVNDDASVKRLKGEGRPVNQVDRRMAVLAGLASVDWVVPFSEDTPQRIIARLLPDLLVKGGDYKIEDIAGGAEVIAAGGQVQVLGFEDGISTTAIIQNIMANQ.

The interval 1 to 319 (MKVSLPAFEK…EALALHHGES (319 aa)) is ribokinase. 195–198 (NMSE) contacts ATP. The active site involves D264. Residues 345–476 (MTNGCFDILH…AIIQNIMANQ (132 aa)) form a cytidylyltransferase region.

The protein in the N-terminal section; belongs to the carbohydrate kinase PfkB family. This sequence in the C-terminal section; belongs to the cytidylyltransferase family. Homodimer.

It catalyses the reaction D-glycero-beta-D-manno-heptose 7-phosphate + ATP = D-glycero-beta-D-manno-heptose 1,7-bisphosphate + ADP + H(+). The catalysed reaction is D-glycero-beta-D-manno-heptose 1-phosphate + ATP + H(+) = ADP-D-glycero-beta-D-manno-heptose + diphosphate. Its pathway is nucleotide-sugar biosynthesis; ADP-L-glycero-beta-D-manno-heptose biosynthesis; ADP-L-glycero-beta-D-manno-heptose from D-glycero-beta-D-manno-heptose 7-phosphate: step 1/4. The protein operates within nucleotide-sugar biosynthesis; ADP-L-glycero-beta-D-manno-heptose biosynthesis; ADP-L-glycero-beta-D-manno-heptose from D-glycero-beta-D-manno-heptose 7-phosphate: step 3/4. In terms of biological role, catalyzes the phosphorylation of D-glycero-D-manno-heptose 7-phosphate at the C-1 position to selectively form D-glycero-beta-D-manno-heptose-1,7-bisphosphate. Functionally, catalyzes the ADP transfer from ATP to D-glycero-beta-D-manno-heptose 1-phosphate, yielding ADP-D-glycero-beta-D-manno-heptose. The chain is Bifunctional protein HldE from Shewanella sp. (strain W3-18-1).